We begin with the raw amino-acid sequence, 303 residues long: Elongation factor Ts (303 aa).

The tract at residues 81–84 (TDFV) is involved in Mg(2+) ion dislocation from EF-Tu.

The protein belongs to the EF-Ts family.

It is found in the cytoplasm. Functionally, associates with the EF-Tu.GDP complex and induces the exchange of GDP to GTP. It remains bound to the aminoacyl-tRNA.EF-Tu.GTP complex up to the GTP hydrolysis stage on the ribosome. This is Elongation factor Ts from Mesomycoplasma hyopneumoniae (strain J / ATCC 25934 / NCTC 10110) (Mycoplasma hyopneumoniae).